The primary structure comprises 151 residues: Multiprotein-bridging factor 1 (151 aa).

The tract at residues 1-32 is disordered; that stretch reads MSSDWDSVTIIGQKARVGGGGPRENVAKTSSQ. The HTH cro/C1-type domain occupies 86 to 140; the sequence is IQQARQEKKLTQKELATKVNEKPNVINDYEAGRAIPNQQLLAKLERALGVKLRGK. Positions 97-116 form a DNA-binding region, H-T-H motif; that stretch reads QKELATKVNEKPNVINDYEA.

The protein belongs to the MBF1 family.

Functionally, transcriptional coactivator that stimulates GCN4-dependent transcriptional activity by bridging the DNA-binding region of GCN4 and TBP (SPT15), thereby recruiting TBP to GCN4-bound promoters. Involved in induction of the ribosome quality control (RQC) pathway; a pathway that degrades nascent peptide chains during problematic translation. Required to prevent stalled ribosomes from frameshifting. In Candida albicans (strain SC5314 / ATCC MYA-2876) (Yeast), this protein is Multiprotein-bridging factor 1 (MBF1).